Consider the following 300-residue polypeptide: Rhodopsin (300 aa).

The Extracellular portion of the chain corresponds to 1–18; the sequence is LHMIHLHWYQYPPMNPMM. The chain crosses the membrane as a helical span at residues 19–43; sequence YPLLLVFMLITGILCLAGNFVTIWV. The Cytoplasmic segment spans residues 44–55; that stretch reads FMNTKSLRTPAN. Residues 56 to 78 traverse the membrane as a helical segment; the sequence is LLVVNLAMSDFLMMFTMFPPMMV. The Extracellular segment spans residues 79-92; it reads TCYYHTWTLGATFC. Cysteines 92 and 168 form a disulfide. A helical transmembrane segment spans residues 93–115; that stretch reads QVYAFLGNLCGCASIWTMVFITF. The 'Ionic lock' involved in activated form stabilization signature appears at 116 to 118; sequence DRY. Topologically, residues 116 to 134 are cytoplasmic; the sequence is DRYNVIVKGVAGEPLSTKK. A helical membrane pass occupies residues 135–155; the sequence is ASLWILTIWILSITWCIAPFF. The Extracellular portion of the chain corresponds to 156–181; that stretch reads GWNRYVPEGNTGCGTDYLSEDILSRS. Residues 182–203 form a helical membrane-spanning segment; the sequence is YLYIYSTWVYFLPLAITIYCHV. At 204–244 the chain is on the cytoplasmic side; the sequence is FIIKAVAAHEKGMRDQAKKMGIKSLRNEEAQKTSAECRLAK. Residues 245-266 traverse the membrane as a helical segment; that stretch reads IAMTTVALWFIAWTPYLLINWV. Topologically, residues 267–277 are extracellular; it reads GMFARSYLSPV. A helical transmembrane segment spans residues 278 to 299; that stretch reads YTIWGYVFAKANAVYNPIVYAI. An N6-(retinylidene)lysine modification is found at K287.

This sequence belongs to the G-protein coupled receptor 1 family. Opsin subfamily. Homodimer. Interacts with GNAQ. Contains one covalently linked retinal chromophore.

The protein resides in the cell projection. It is found in the rhabdomere membrane. In terms of biological role, photoreceptor required for image-forming vision at low light intensity. Can use both retinal and 3-dehydroretinal as visual pigment. Light-induced isomerization of 11-cis to all-trans retinal triggers a conformational change that activates signaling via G-proteins. Signaling via GNAQ probably mediates the activation of phospholipase C. The protein is Rhodopsin (RHO) of Cambarus maculatus (Freckled crayfish).